Here is a 316-residue protein sequence, read N- to C-terminus: Ribosomal RNA small subunit methyltransferase H (316 aa).

Residues 35–37 (AGH), Asp55, Phe84, Asp105, and Gln112 contribute to the S-adenosyl-L-methionine site.

This sequence belongs to the methyltransferase superfamily. RsmH family.

The protein resides in the cytoplasm. It carries out the reaction cytidine(1402) in 16S rRNA + S-adenosyl-L-methionine = N(4)-methylcytidine(1402) in 16S rRNA + S-adenosyl-L-homocysteine + H(+). Its function is as follows. Specifically methylates the N4 position of cytidine in position 1402 (C1402) of 16S rRNA. The protein is Ribosomal RNA small subunit methyltransferase H of Streptococcus pneumoniae serotype 4 (strain ATCC BAA-334 / TIGR4).